A 186-amino-acid polypeptide reads, in one-letter code: Tumor necrosis factor alpha-induced protein 8-like protein 1 (186 aa).

The protein belongs to the TNFAIP8 family. As to quaternary structure, interacts with FBXW5; TNFAIP8L1 competes with TSC2 to bind FBXW5 increasing TSC2 stability by preventing its ubiquitination.

The protein resides in the cytoplasm. Its function is as follows. Acts as a negative regulator of mTOR activity. The polypeptide is Tumor necrosis factor alpha-induced protein 8-like protein 1 (TNFAIP8L1) (Bos taurus (Bovine)).